Reading from the N-terminus, the 290-residue chain is tRNA(Ile)-lysidine synthase (290 aa).

ATP is bound at residue 12-17 (SGGSDS).

This sequence belongs to the tRNA(Ile)-lysidine synthase family.

The protein localises to the cytoplasm. It carries out the reaction cytidine(34) in tRNA(Ile2) + L-lysine + ATP = lysidine(34) in tRNA(Ile2) + AMP + diphosphate + H(+). In terms of biological role, ligates lysine onto the cytidine present at position 34 of the AUA codon-specific tRNA(Ile) that contains the anticodon CAU, in an ATP-dependent manner. Cytidine is converted to lysidine, thus changing the amino acid specificity of the tRNA from methionine to isoleucine. In Mycoplasma genitalium (strain ATCC 33530 / DSM 19775 / NCTC 10195 / G37) (Mycoplasmoides genitalium), this protein is tRNA(Ile)-lysidine synthase.